The chain runs to 1045 residues: Unconventional myosin-Ia (1045 aa).

The Myosin motor domain occupies 11 to 697; that stretch reads AAVGDLVMLD…TLFDLEKRRQ (687 aa). 104-111 provides a ligand contact to ATP; the sequence is GESGAGKT. An actin-binding region spans residues 574–596; it reads VATLMKNLYSKNPNYIRCIKPND. 3 consecutive IQ domains span residues 701-727, 723-750, and 746-774; these read AELA…RKSQ, MRKS…KRSV, and MKRS…RSDA. The TH1 domain occupies 861 to 1044; the sequence is KALYAQSLQQ…RGSHKMEILV (184 aa).

Belongs to the TRAFAC class myosin-kinesin ATPase superfamily. Myosin family. In terms of tissue distribution, intestine.

Could play an important role in morphogenesis and function of intestinal microvilli. This chain is Unconventional myosin-Ia (MYO1A), found in Gallus gallus (Chicken).